Consider the following 475-residue polypeptide: Kynureninase (475 aa).

Pyridoxal 5'-phosphate-binding positions include Leu-142, Thr-143, 170-173 (FPSD), Asp-255, His-258, and Tyr-280. Lys-281 bears the N6-(pyridoxal phosphate)lysine mark. Residues Trp-320 and Asn-348 each coordinate pyridoxal 5'-phosphate.

It belongs to the kynureninase family. In terms of assembly, homodimer. Pyridoxal 5'-phosphate serves as cofactor.

Its subcellular location is the cytoplasm. It carries out the reaction L-kynurenine + H2O = anthranilate + L-alanine + H(+). The enzyme catalyses 3-hydroxy-L-kynurenine + H2O = 3-hydroxyanthranilate + L-alanine + H(+). Its pathway is amino-acid degradation; L-kynurenine degradation; L-alanine and anthranilate from L-kynurenine: step 1/1. It participates in cofactor biosynthesis; NAD(+) biosynthesis; quinolinate from L-kynurenine: step 2/3. Functionally, catalyzes the cleavage of L-kynurenine (L-Kyn) and L-3-hydroxykynurenine (L-3OHKyn) into anthranilic acid (AA) and 3-hydroxyanthranilic acid (3-OHAA), respectively. This chain is Kynureninase (bna5), found in Botryotinia fuckeliana (strain B05.10) (Noble rot fungus).